The chain runs to 185 residues: CASP-like protein 2C1 (185 aa).

The Cytoplasmic portion of the chain corresponds to 1–12 (MVAARVSEVKAE). The chain crosses the membrane as a helical span at residues 13–33 (GVLRGACAALAAAAALLVGLS). At 34–52 (TQTETVLLVRKKATVKDVQ) the chain is on the extracellular side. The helical transmembrane segment at 53–73 (ALWVLAMAAAAAAGYHLLQLL) threads the bilayer. Topologically, residues 74–105 (KCFYLGRRVGGGASPCRRSSRALAWTCLLLDK) are cytoplasmic. A helical membrane pass occupies residues 106–126 (ACAYTTFATTVAAAQACVIAL). The Extracellular portion of the chain corresponds to 127–147 (DGAHALQWTKLCNIYTRFCEQ). A helical transmembrane segment spans residues 148–168 (IAGSLVLGMLAAVGTAVLSAA). Residues 169 to 185 (SARNVFRHYSPGTYAAH) lie on the Cytoplasmic side of the membrane.

It belongs to the Casparian strip membrane proteins (CASP) family. As to quaternary structure, homodimer and heterodimers.

It localises to the cell membrane. This Sorghum bicolor (Sorghum) protein is CASP-like protein 2C1.